A 288-amino-acid chain; its full sequence is DNA repair protein RecO (288 aa).

Belongs to the RecO family.

Its function is as follows. Involved in DNA repair and RecF pathway recombination. The chain is DNA repair protein RecO from Trichodesmium erythraeum (strain IMS101).